Here is a 146-residue protein sequence, read N- to C-terminus: Lysozyme C-2 (146 aa).

Residues 1 to 18 form the signal peptide; that stretch reads MKTLLVLALLLLSVSVQA. The region spanning 19-146 is the C-type lysozyme domain; that stretch reads KVYDRCEFAR…VSQYIRGCKL (128 aa). Intrachain disulfides connect cysteine 24-cysteine 144, cysteine 48-cysteine 132, cysteine 81-cysteine 97, and cysteine 93-cysteine 111. Active-site residues include glutamate 53 and aspartate 69.

This sequence belongs to the glycosyl hydrolase 22 family. Monomer.

It localises to the secreted. It carries out the reaction Hydrolysis of (1-&gt;4)-beta-linkages between N-acetylmuramic acid and N-acetyl-D-glucosamine residues in a peptidoglycan and between N-acetyl-D-glucosamine residues in chitodextrins.. Functionally, lysozymes have primarily a bacteriolytic function; those in tissues and body fluids are associated with the monocyte-macrophage system and enhance the activity of immunoagents. This chain is Lysozyme C-2, found in Sus scrofa (Pig).